Reading from the N-terminus, the 327-residue chain is Aspartate--ammonia ligase (327 aa).

Belongs to the class-II aminoacyl-tRNA synthetase family. AsnA subfamily.

Its subcellular location is the cytoplasm. It catalyses the reaction L-aspartate + NH4(+) + ATP = L-asparagine + AMP + diphosphate + H(+). It functions in the pathway amino-acid biosynthesis; L-asparagine biosynthesis; L-asparagine from L-aspartate (ammonia route): step 1/1. The protein is Aspartate--ammonia ligase of Bacillus cereus (strain G9842).